The primary structure comprises 128 residues: DNA-directed RNA polymerase subunit omega (128 aa).

The segment at 87-106 is disordered; that stretch reads ARSSQAAPKSAPGQEIGKSF.

Belongs to the RNA polymerase subunit omega family. The RNAP catalytic core consists of 2 alpha, 1 beta, 1 beta' and 1 omega subunit. When a sigma factor is associated with the core the holoenzyme is formed, which can initiate transcription.

The enzyme catalyses RNA(n) + a ribonucleoside 5'-triphosphate = RNA(n+1) + diphosphate. In terms of biological role, promotes RNA polymerase assembly. Latches the N- and C-terminal regions of the beta' subunit thereby facilitating its interaction with the beta and alpha subunits. In Anaplasma marginale (strain St. Maries), this protein is DNA-directed RNA polymerase subunit omega.